The following is a 517-amino-acid chain: Bifunctional purine biosynthesis protein PurH (517 aa).

The MGS-like domain maps to 1-146 (MGRLVLLSVS…KNFAHLTVLC (146 aa)).

It belongs to the PurH family.

It catalyses the reaction (6R)-10-formyltetrahydrofolate + 5-amino-1-(5-phospho-beta-D-ribosyl)imidazole-4-carboxamide = 5-formamido-1-(5-phospho-D-ribosyl)imidazole-4-carboxamide + (6S)-5,6,7,8-tetrahydrofolate. The enzyme catalyses IMP + H2O = 5-formamido-1-(5-phospho-D-ribosyl)imidazole-4-carboxamide. Its pathway is purine metabolism; IMP biosynthesis via de novo pathway; 5-formamido-1-(5-phospho-D-ribosyl)imidazole-4-carboxamide from 5-amino-1-(5-phospho-D-ribosyl)imidazole-4-carboxamide (10-formyl THF route): step 1/1. The protein operates within purine metabolism; IMP biosynthesis via de novo pathway; IMP from 5-formamido-1-(5-phospho-D-ribosyl)imidazole-4-carboxamide: step 1/1. This Gloeothece citriformis (strain PCC 7424) (Cyanothece sp. (strain PCC 7424)) protein is Bifunctional purine biosynthesis protein PurH.